Reading from the N-terminus, the 542-residue chain is Chaperonin GroEL 1 (542 aa).

ATP is bound by residues Thr-30–Pro-33, Lys-51, Asp-87–Thr-91, Gly-415, Asn-480–Ala-482, and Asp-496.

It belongs to the chaperonin (HSP60) family. Forms a cylinder of 14 subunits composed of two heptameric rings stacked back-to-back. Interacts with the co-chaperonin GroES.

Its subcellular location is the cytoplasm. The enzyme catalyses ATP + H2O + a folded polypeptide = ADP + phosphate + an unfolded polypeptide.. Its function is as follows. Together with its co-chaperonin GroES, plays an essential role in assisting protein folding. The GroEL-GroES system forms a nano-cage that allows encapsulation of the non-native substrate proteins and provides a physical environment optimized to promote and accelerate protein folding. The chain is Chaperonin GroEL 1 from Nitrobacter winogradskyi (strain ATCC 25391 / DSM 10237 / CIP 104748 / NCIMB 11846 / Nb-255).